Consider the following 928-residue polypeptide: Type II inositol 3,4-bisphosphate 4-phosphatase (928 aa).

Over residues 1–13 (MEIKEEGTSEEGQ) the composition is skewed to basic and acidic residues. Disordered regions lie at residues 1–23 (MEIKEEGTSEEGQHFLPAAQAND), 481–516 (ILRKPPSPKVSTEEKSSQHDSPQQLRRQDSIPHHSD), and 548–575 (SRNDKSTGGDSSKDGDADPNLEDSLTSH). The C2 domain occupies 23-165 (DPEDIQFTSI…LKSKEQLLSL (143 aa)). Basic and acidic residues-rich tracts occupy residues 506-516 (RRQDSIPHHSD) and 548-563 (SRNDKSTGGDSSKDGD).

It belongs to the inositol 3,4-bisphosphate 4-phosphatase family.

It carries out the reaction a 1,2-diacyl-sn-glycero-3-phospho-(1D-myo-inositol-3,4-bisphosphate) + H2O = a 1,2-diacyl-sn-glycero-3-phospho-(1D-myo-inositol-3-phosphate) + phosphate. The enzyme catalyses 1D-myo-inositol 3,4-bisphosphate + H2O = 1D-myo-inositol 3-phosphate + phosphate. The catalysed reaction is 1D-myo-inositol 1,3,4-trisphosphate + H2O = 1D-myo-inositol 1,3-bisphosphate + phosphate. It functions in the pathway signal transduction; phosphatidylinositol signaling pathway. Its activity is regulated as follows. Strongly inhibited by inositol hexakisphosphate. Its function is as follows. Catalyzes the hydrolysis of the 4-position phosphate of phosphatidylinositol 3,4-bisphosphate, inositol 1,3,4-trisphosphate and inositol 3,4-bisphosphate. Plays a role in the late stages of macropinocytosis by dephosphorylating phosphatidylinositol 3,4-bisphosphate in membrane ruffles. The lipid phosphatase activity is critical for tumor suppressor function. Antagonizes the PI3K-AKT/PKB signaling pathway by dephosphorylating phosphoinositides and thereby modulating cell cycle progression and cell survival. This is Type II inositol 3,4-bisphosphate 4-phosphatase (Inpp4b) from Rattus norvegicus (Rat).